The chain runs to 197 residues: dITP/XTP pyrophosphatase (197 aa).

10-15 is a substrate binding site; the sequence is SHNGGK. Mg(2+) is bound by residues Glu-41 and Asp-70. Asp-70 functions as the Proton acceptor in the catalytic mechanism. Substrate is bound by residues Ser-71, 154-157, Lys-177, and 182-183; these read FGYD and HR.

It belongs to the HAM1 NTPase family. As to quaternary structure, homodimer. Requires Mg(2+) as cofactor.

It carries out the reaction XTP + H2O = XMP + diphosphate + H(+). It catalyses the reaction dITP + H2O = dIMP + diphosphate + H(+). The catalysed reaction is ITP + H2O = IMP + diphosphate + H(+). Functionally, pyrophosphatase that catalyzes the hydrolysis of nucleoside triphosphates to their monophosphate derivatives, with a high preference for the non-canonical purine nucleotides XTP (xanthosine triphosphate), dITP (deoxyinosine triphosphate) and ITP. Seems to function as a house-cleaning enzyme that removes non-canonical purine nucleotides from the nucleotide pool, thus preventing their incorporation into DNA/RNA and avoiding chromosomal lesions. This is dITP/XTP pyrophosphatase from Pseudomonas syringae pv. tomato (strain ATCC BAA-871 / DC3000).